The sequence spans 292 residues: 4-hydroxy-tetrahydrodipicolinate synthase (292 aa).

Position 48 (Thr-48) interacts with pyruvate. The active-site Proton donor/acceptor is the Tyr-136. Residue Lys-164 is the Schiff-base intermediate with substrate of the active site. Ile-204 is a binding site for pyruvate.

The protein belongs to the DapA family. In terms of assembly, homotetramer; dimer of dimers.

Its subcellular location is the cytoplasm. It carries out the reaction L-aspartate 4-semialdehyde + pyruvate = (2S,4S)-4-hydroxy-2,3,4,5-tetrahydrodipicolinate + H2O + H(+). The protein operates within amino-acid biosynthesis; L-lysine biosynthesis via DAP pathway; (S)-tetrahydrodipicolinate from L-aspartate: step 3/4. Catalyzes the condensation of (S)-aspartate-beta-semialdehyde [(S)-ASA] and pyruvate to 4-hydroxy-tetrahydrodipicolinate (HTPA). This chain is 4-hydroxy-tetrahydrodipicolinate synthase, found in Acetivibrio thermocellus (strain ATCC 27405 / DSM 1237 / JCM 9322 / NBRC 103400 / NCIMB 10682 / NRRL B-4536 / VPI 7372) (Clostridium thermocellum).